Consider the following 75-residue polypeptide: uncharacterized protein (75 aa).

The segment covering 1-14 (MNDNNDNNNNNKNI) has biased composition (low complexity). The disordered stretch occupies residues 1-30 (MNDNNDNNNNNKNIDNVDDDNDDNDKGKYK).

This is an uncharacterized protein from Dictyostelium discoideum (Social amoeba).